The sequence spans 185 residues: Mitochondrial inner membrane protease atp23 (185 aa).

His-86 lines the a divalent metal cation pocket. The active site involves Glu-87. An a divalent metal cation-binding site is contributed by His-90.

The protein belongs to the peptidase M76 family.

It is found in the mitochondrion inner membrane. Functionally, has a dual role in the assembly of mitochondrial ATPase. Acts as a protease that removes N-terminal residues of mitochondrial ATPase CF(0) subunit 6 at the intermembrane space side. Also involved in the correct assembly of the membrane-embedded ATPase CF(0) particle, probably mediating association of subunit 6 with the subunit 9 ring. The sequence is that of Mitochondrial inner membrane protease atp23 (atp23) from Schizosaccharomyces pombe (strain 972 / ATCC 24843) (Fission yeast).